The primary structure comprises 755 residues: MLLATDLDGTFLGGDPKDRLSLYQTIAAHPEIRLAYVTGRSLESVLPLLADPTLPQPDFIISDVGASLVHGDSLQPIQPLQSAVDALWPGDSQVASAIERFALERQDVPQVRRCSYFCNPEQAANPELLTIAESLGCDLLYSAERYLDFLPKGVNKGSSLQALIDWLELDNDQVLTAGDTLNDLSMLSGQFKGVCVGASEPGLLQATRQYSLVFHAERAGCGGILEAFVHFGFLGKQGIAAEGKQVAEPGKADLMMVYHRLPYEEFRGADGKLQRRRPTSPNGIIPTLLSFFGDGRAGSWVAWAEHDENSGETFDSHTTVDAERYPKLTAARVALSKEEVDIFYKRFSKEAFWPTLHTFWERGQFREDDWQVFLKVNRAFAERTALEAAEGATVWLHDYNLWMVPGYLRELRPDLRIAFFHHTYFPSADVFNVLPWRRQIIGSLLQCDYIGFHIPRQVENFVDAARGVMPLQTVSRQNCAPRFITYGCAVGLERMTTAVDTGNRVVKLGAHPVGLDIERVRSALAAPKIREMMERLRSELAGVKLILSVERLDYTKGILEKLNAYERLLEENPELLGKVTLVTVCVPAAKEMTIYDELQGQIEQAVGRINGRFARIGWTPLQFFFRSLPFEEVSAWYAMADVMWITPLRDGLNLVAKEFVAAQGLLDGRGVLVLSEFAGAAAELKGALLTNPHDPVDMTQTCYVALNMPKAEAQARLRELFDIVNYNDIRRWGDEFLAAVSDPQEQLDRALGLVG.

The protein belongs to the glycosyltransferase 20 family.

It catalyses the reaction ADP-alpha-D-glucose + sn-glycerol 3-phosphate = 2-O-(alpha-D-glucopyranosyl)-sn-glycerol 3-phosphate + ADP + H(+). It functions in the pathway glycan metabolism; glucosylglycerol biosynthesis. Its function is as follows. Involved in salt tolerance by producing GG-phosphate from ADP-glucose and glycerol-3-phosphate (G3P), an intermediate in the synthesis of the osmolyte glucosylglycerol (GG). The protein is Glucosylglycerol-phosphate synthase (ggpS) of Pseudomonas anguilliseptica.